A 572-amino-acid polypeptide reads, in one-letter code: Proline--tRNA ligase (572 aa).

This sequence belongs to the class-II aminoacyl-tRNA synthetase family. ProS type 1 subfamily. In terms of assembly, homodimer.

The protein resides in the cytoplasm. The catalysed reaction is tRNA(Pro) + L-proline + ATP = L-prolyl-tRNA(Pro) + AMP + diphosphate. Its function is as follows. Catalyzes the attachment of proline to tRNA(Pro) in a two-step reaction: proline is first activated by ATP to form Pro-AMP and then transferred to the acceptor end of tRNA(Pro). As ProRS can inadvertently accommodate and process non-cognate amino acids such as alanine and cysteine, to avoid such errors it has two additional distinct editing activities against alanine. One activity is designated as 'pretransfer' editing and involves the tRNA(Pro)-independent hydrolysis of activated Ala-AMP. The other activity is designated 'posttransfer' editing and involves deacylation of mischarged Ala-tRNA(Pro). The misacylated Cys-tRNA(Pro) is not edited by ProRS. This Escherichia coli O157:H7 protein is Proline--tRNA ligase.